We begin with the raw amino-acid sequence, 348 residues long: Protein RecA (348 aa).

65 to 72 lines the ATP pocket; it reads GPESSGKT. Positions 326–336 are enriched in basic and acidic residues; sequence LLTPAEEKPET. Residues 326-348 are disordered; the sequence is LLTPAEEKPETDAAPEIEENEEF. Residues 338 to 348 are compositionally biased toward acidic residues; that stretch reads AAPEIEENEEF.

The protein belongs to the RecA family.

Its subcellular location is the cytoplasm. In terms of biological role, can catalyze the hydrolysis of ATP in the presence of single-stranded DNA, the ATP-dependent uptake of single-stranded DNA by duplex DNA, and the ATP-dependent hybridization of homologous single-stranded DNAs. It interacts with LexA causing its activation and leading to its autocatalytic cleavage. The protein is Protein RecA of Aliivibrio fischeri (strain ATCC 700601 / ES114) (Vibrio fischeri).